Consider the following 302-residue polypeptide: NAD kinase 2 (302 aa).

The Proton acceptor role is filled by Asp-78. NAD(+) contacts are provided by residues 78–79 (DG), 152–153 (NE), Asp-182, 193–198 (TAYSLS), and Ala-217.

This sequence belongs to the NAD kinase family. The cofactor is a divalent metal cation.

The protein localises to the cytoplasm. The catalysed reaction is NAD(+) + ATP = ADP + NADP(+) + H(+). Functionally, involved in the regulation of the intracellular balance of NAD and NADP, and is a key enzyme in the biosynthesis of NADP. Catalyzes specifically the phosphorylation on 2'-hydroxyl of the adenosine moiety of NAD to yield NADP. The sequence is that of NAD kinase 2 from Prochlorococcus marinus (strain SARG / CCMP1375 / SS120).